The primary structure comprises 256 residues: Type III pantothenate kinase (256 aa).

An ATP-binding site is contributed by 6 to 13 (DIGNTHTV). Substrate is bound by residues tyrosine 100 and 107–110 (GADR). Aspartate 109 acts as the Proton acceptor in catalysis. A K(+)-binding site is contributed by aspartate 129. ATP is bound at residue threonine 132. Threonine 184 provides a ligand contact to substrate.

Belongs to the type III pantothenate kinase family. As to quaternary structure, homodimer. NH4(+) serves as cofactor. It depends on K(+) as a cofactor.

Its subcellular location is the cytoplasm. It catalyses the reaction (R)-pantothenate + ATP = (R)-4'-phosphopantothenate + ADP + H(+). It functions in the pathway cofactor biosynthesis; coenzyme A biosynthesis; CoA from (R)-pantothenate: step 1/5. Functionally, catalyzes the phosphorylation of pantothenate (Pan), the first step in CoA biosynthesis. In Acidothermus cellulolyticus (strain ATCC 43068 / DSM 8971 / 11B), this protein is Type III pantothenate kinase.